The following is a 461-amino-acid chain: MSLAEAKKLDKKFPTFKNEFAIPTFGSLGIKNNKYESSTESIYLCGNSLGLMPKNTKKAINDELNAWVERGVESHFNHPDKSLTPWVDIDLPLLPLIAPIVGAKENEVAVMGSLTANLNALLIHFYKPEGKRTKILFEKQAFPSDYYAFLNIVKLFGYDEKHLIQLEVQPGETYIKTERIIKAIDENSDELALVCFPGIQYYTGQFFKIEEITKYAKEKSQQIKVGWDLAHAVGNVPLNLHDWGVDFAAWCSYKYLNSGPGAIGGIFVHEKYTIENKKSSFVPRLAGWWGNNSQERFKMLEEFDPINSALSYRQSNPSVLDVVAVKSSLEVYAKVGGVSKLREKSVALTQFLQDLLTNSKYYIPQSSTSNSKFGFKILTPLNPAERGCQLSIMFQPHFDEKDKNVMERVNAYLHDHAIICDERRPDVIRLAPLPLYNTFEETFIAVQRLFEALDNISKEYM.

Pyridoxal 5'-phosphate is bound by residues Leu114, Thr115, Phe142–Asp145, Asp228, His231, and Tyr253. An N6-(pyridoxal phosphate)lysine modification is found at Lys254. Positions 288 and 316 each coordinate pyridoxal 5'-phosphate.

This sequence belongs to the kynureninase family. Homodimer. Requires pyridoxal 5'-phosphate as cofactor.

It is found in the cytoplasm. The enzyme catalyses L-kynurenine + H2O = anthranilate + L-alanine + H(+). It catalyses the reaction 3-hydroxy-L-kynurenine + H2O = 3-hydroxyanthranilate + L-alanine + H(+). Its pathway is amino-acid degradation; L-kynurenine degradation; L-alanine and anthranilate from L-kynurenine: step 1/1. It functions in the pathway cofactor biosynthesis; NAD(+) biosynthesis; quinolinate from L-kynurenine: step 2/3. Functionally, catalyzes the cleavage of L-kynurenine (L-Kyn) and L-3-hydroxykynurenine (L-3OHKyn) into anthranilic acid (AA) and 3-hydroxyanthranilic acid (3-OHAA), respectively. This is Kynureninase from Candida albicans (strain SC5314 / ATCC MYA-2876) (Yeast).